The sequence spans 200 residues: Holliday junction branch migration complex subunit RuvA (200 aa).

The domain I stretch occupies residues 1 to 63 (MFEYLTGLIT…EDAITLFGFA (63 aa)). Positions 64-142 (TQAEKRLFTQ…AVQDEVQLDF (79 aa)) are domain II. The segment at 143–151 (TAPGPLGPS) is flexible linker. Positions 151–200 (SAALQDALAALESLGYTTKQVERVQKQLEGLQGELSTNDYLSQGLKLLSR) are domain III.

It belongs to the RuvA family. Homotetramer. Forms an RuvA(8)-RuvB(12)-Holliday junction (HJ) complex. HJ DNA is sandwiched between 2 RuvA tetramers; dsDNA enters through RuvA and exits via RuvB. An RuvB hexamer assembles on each DNA strand where it exits the tetramer. Each RuvB hexamer is contacted by two RuvA subunits (via domain III) on 2 adjacent RuvB subunits; this complex drives branch migration. In the full resolvosome a probable DNA-RuvA(4)-RuvB(12)-RuvC(2) complex forms which resolves the HJ.

It localises to the cytoplasm. In terms of biological role, the RuvA-RuvB-RuvC complex processes Holliday junction (HJ) DNA during genetic recombination and DNA repair, while the RuvA-RuvB complex plays an important role in the rescue of blocked DNA replication forks via replication fork reversal (RFR). RuvA specifically binds to HJ cruciform DNA, conferring on it an open structure. The RuvB hexamer acts as an ATP-dependent pump, pulling dsDNA into and through the RuvAB complex. HJ branch migration allows RuvC to scan DNA until it finds its consensus sequence, where it cleaves and resolves the cruciform DNA. This Limosilactobacillus fermentum (strain NBRC 3956 / LMG 18251) (Lactobacillus fermentum) protein is Holliday junction branch migration complex subunit RuvA.